Here is a 435-residue protein sequence, read N- to C-terminus: 5-methylthioadenosine/S-adenosylhomocysteine deaminase (435 aa).

Residues His-65 and His-67 each contribute to the Zn(2+) site. Substrate is bound by residues Glu-94, Arg-150, and His-189. His-216 serves as a coordination point for Zn(2+). Substrate-binding residues include Glu-219 and Asp-304. Residue Asp-304 participates in Zn(2+) binding.

This sequence belongs to the metallo-dependent hydrolases superfamily. MTA/SAH deaminase family. Zn(2+) serves as cofactor.

It carries out the reaction S-adenosyl-L-homocysteine + H2O + H(+) = S-inosyl-L-homocysteine + NH4(+). It catalyses the reaction S-methyl-5'-thioadenosine + H2O + H(+) = S-methyl-5'-thioinosine + NH4(+). Catalyzes the deamination of 5-methylthioadenosine and S-adenosyl-L-homocysteine into 5-methylthioinosine and S-inosyl-L-homocysteine, respectively. Is also able to deaminate adenosine. This is 5-methylthioadenosine/S-adenosylhomocysteine deaminase from Bacillus cereus (strain G9842).